Reading from the N-terminus, the 761-residue chain is 5-methyltetrahydropteroyltriglutamate--homocysteine methyltransferase (761 aa).

5-methyltetrahydropteroyltri-L-glutamate is bound by residues 16 to 19 (RELK) and K118. L-homocysteine is bound by residues 436 to 438 (IGS) and E489. L-methionine-binding positions include 436–438 (IGS) and E489. Residues 520-521 (RC) and W566 each bind 5-methyltetrahydropteroyltri-L-glutamate. L-homocysteine is bound at residue D604. Position 604 (D604) interacts with L-methionine. E610 serves as a coordination point for 5-methyltetrahydropteroyltri-L-glutamate. Zn(2+) contacts are provided by H646, C648, and E670. Residue H699 is the Proton donor of the active site. A Zn(2+)-binding site is contributed by C731.

The protein belongs to the vitamin-B12 independent methionine synthase family. Zn(2+) serves as cofactor.

It catalyses the reaction 5-methyltetrahydropteroyltri-L-glutamate + L-homocysteine = tetrahydropteroyltri-L-glutamate + L-methionine. Its pathway is amino-acid biosynthesis; L-methionine biosynthesis via de novo pathway; L-methionine from L-homocysteine (MetE route): step 1/1. In terms of biological role, catalyzes the transfer of a methyl group from 5-methyltetrahydrofolate to homocysteine resulting in methionine formation. This chain is 5-methyltetrahydropteroyltriglutamate--homocysteine methyltransferase, found in Vibrio cholerae serotype O1 (strain ATCC 39315 / El Tor Inaba N16961).